The primary structure comprises 188 residues: Protein GrpE (188 aa).

Positions 1-22 (MEENKQNQNLNTEETTEQQTEA) are enriched in low complexity. A disordered region spans residues 1-26 (MEENKQNQNLNTEETTEQQTEAETVE).

It belongs to the GrpE family. In terms of assembly, homodimer.

The protein resides in the cytoplasm. In terms of biological role, participates actively in the response to hyperosmotic and heat shock by preventing the aggregation of stress-denatured proteins, in association with DnaK and GrpE. It is the nucleotide exchange factor for DnaK and may function as a thermosensor. Unfolded proteins bind initially to DnaJ; upon interaction with the DnaJ-bound protein, DnaK hydrolyzes its bound ATP, resulting in the formation of a stable complex. GrpE releases ADP from DnaK; ATP binding to DnaK triggers the release of the substrate protein, thus completing the reaction cycle. Several rounds of ATP-dependent interactions between DnaJ, DnaK and GrpE are required for fully efficient folding. The chain is Protein GrpE from Exiguobacterium sibiricum (strain DSM 17290 / CCUG 55495 / CIP 109462 / JCM 13490 / 255-15).